Here is a 367-residue protein sequence, read N- to C-terminus: MHFTIQREALLKPLQLVAGVVERRQTLPVLSNVLLVVEGQQLSLTGTDLEVELVGRVVLEDAAEPGEITVPARKLMDICKSLPNDVLIDIRVEEQKLLVKAGRSRFTLSTLPANDFPTVEEGPGSLNFSIAQSKLRRLIDRTSFAMAQQDVRYYLNGMLLEVNGGTLRSVATDGHRLAMCSLDAQIPSQDRHQVIVPRKGILELARLLTEQDGEVGIVLGQHHIRATTGEFTFTSKLVDGKFPDYERVLPRGGDKLVVGDRQQLREAFSRTAILSNEKYRGIRLQLSNGLLKIQANNPEQEEAEEEVQVEYNGGNLEIGFNVSYLLDVLGVIGTEQVRFILSDSNSSALVHEADNDDSAYVVMPMRL.

The protein belongs to the beta sliding clamp family. In terms of assembly, forms a ring-shaped head-to-tail homodimer around DNA which binds and tethers DNA polymerases and other proteins to the DNA. The DNA replisome complex has a single clamp-loading complex (3 tau and 1 each of delta, delta', psi and chi subunits) which binds 3 Pol III cores (1 core on the leading strand and 2 on the lagging strand) each with a beta sliding clamp dimer. Additional proteins in the replisome are other copies of gamma, psi and chi, Ssb, DNA helicase and RNA primase.

It localises to the cytoplasm. Its function is as follows. Confers DNA tethering and processivity to DNA polymerases and other proteins. Acts as a clamp, forming a ring around DNA (a reaction catalyzed by the clamp-loading complex) which diffuses in an ATP-independent manner freely and bidirectionally along dsDNA. Initially characterized for its ability to contact the catalytic subunit of DNA polymerase III (Pol III), a complex, multichain enzyme responsible for most of the replicative synthesis in bacteria; Pol III exhibits 3'-5' exonuclease proofreading activity. The beta chain is required for initiation of replication as well as for processivity of DNA replication. The sequence is that of Beta sliding clamp (dnaN) from Pseudomonas aeruginosa (strain ATCC 15692 / DSM 22644 / CIP 104116 / JCM 14847 / LMG 12228 / 1C / PRS 101 / PAO1).